The primary structure comprises 59 residues: Dendroaspin (59 aa).

Intrachain disulfides connect Cys-3–Cys-22, Cys-17–Cys-37, Cys-39–Cys-51, and Cys-52–Cys-57. A Cell attachment site motif is present at residues 43–45 (RGD).

It belongs to the three-finger toxin family. Short-chain subfamily. Antiplatelet toxin sub-subfamily. As to expression, expressed by the venom gland.

It is found in the secreted. Its function is as follows. Inhibits ADP-induced platelet aggregation and inhibits the binding of purified platelet fibrinogen receptor alpha-IIb/beta-3 (ITGA2B/ITGB3) to immobilized fibrinogen. Has also been described to inhibit cell adhesion to fibrinogen, fibronectin, laminin and collagen. This chain is Dendroaspin, found in Dendroaspis jamesoni kaimosae (Eastern Jameson's mamba).